We begin with the raw amino-acid sequence, 471 residues long: Ribulose bisphosphate carboxylase large chain (471 aa).

Residue lysine 5 is modified to N6,N6,N6-trimethyllysine. 2 residues coordinate substrate: asparagine 114 and threonine 164. Catalysis depends on lysine 166, which acts as the Proton acceptor. Substrate is bound at residue lysine 168. Lysine 192, aspartate 194, and glutamate 195 together coordinate Mg(2+). Lysine 192 is modified (N6-carboxylysine). The active-site Proton acceptor is histidine 285. The substrate site is built by arginine 286, histidine 318, and serine 370.

The protein belongs to the RuBisCO large chain family. Type I subfamily. As to quaternary structure, heterohexadecamer of 8 large chains and 8 small chains; disulfide-linked. The disulfide link is formed within the large subunit homodimers. Mg(2+) serves as cofactor. In terms of processing, the disulfide bond which can form in the large chain dimeric partners within the hexadecamer appears to be associated with oxidative stress and protein turnover.

The protein resides in the plastid. It is found in the chloroplast. The enzyme catalyses 2 (2R)-3-phosphoglycerate + 2 H(+) = D-ribulose 1,5-bisphosphate + CO2 + H2O. It catalyses the reaction D-ribulose 1,5-bisphosphate + O2 = 2-phosphoglycolate + (2R)-3-phosphoglycerate + 2 H(+). RuBisCO catalyzes two reactions: the carboxylation of D-ribulose 1,5-bisphosphate, the primary event in carbon dioxide fixation, as well as the oxidative fragmentation of the pentose substrate in the photorespiration process. Both reactions occur simultaneously and in competition at the same active site. The protein is Ribulose bisphosphate carboxylase large chain of Strychnos nux-vomica (Poison nut).